A 77-amino-acid polypeptide reads, in one-letter code: Large ribosomal subunit protein eL20 (77 aa).

This sequence belongs to the eukaryotic ribosomal protein eL20 family. Part of the 50S ribosomal subunit. Binds 23S rRNA.

The sequence is that of Large ribosomal subunit protein eL20 from Pyrococcus abyssi (strain GE5 / Orsay).